The primary structure comprises 79 residues: uncharacterized protein (79 aa).

Residues 51–79 (PAQFPKVQRPPTLLGGKNTSTQTTLHPVI) are disordered. A compositionally biased stretch (polar residues) spans 67–79 (KNTSTQTTLHPVI).

This is an uncharacterized protein from Homo sapiens (Human).